Here is a 498-residue protein sequence, read N- to C-terminus: L-amino acid oxidase (498 aa).

An N-terminal signal peptide occupies residues 1-11; the sequence is SLLFLAAVGSC. Cys21 and Cys184 are oxidised to a cystine. FAD is bound by residues 54-55, 74-75, 74-78, Arg82, and 98-101; these read MS, EA, EASER, and GPMR. Arg101 is a substrate binding site. Residue Asn183 is glycosylated (N-linked (GlcNAc...) asparagine). His234 lines the substrate pocket. Val272 lines the FAD pocket. A disulfide bond links Cys342 and Cys423. Tyr383 provides a ligand contact to substrate. Residues Glu468, 475 to 480, and 476 to 480 each bind FAD; these read GWIDST and WIDST. Substrate is bound at residue 475-476; sequence GW.

It belongs to the flavin monoamine oxidase family. FIG1 subfamily. Homodimer; non-covalently linked. It depends on FAD as a cofactor. Post-translationally, N-glycosylated. Contains 18.73% carbohydrates. As to expression, expressed by the venom gland.

Its subcellular location is the secreted. The catalysed reaction is an L-alpha-amino acid + O2 + H2O = a 2-oxocarboxylate + H2O2 + NH4(+). The enzyme catalyses L-leucine + O2 + H2O = 4-methyl-2-oxopentanoate + H2O2 + NH4(+). Its activity is regulated as follows. Strongly inhibited by glutathione, and moderately inhibited by PMSF, acetate iodine and glutamic acid. Is also inhibited by Zn(2+) ions, but not by Ca(2+), Mg(2+) and Mn(2+). Functionally, catalyzes an oxidative deamination of predominantly hydrophobic and aromatic L-amino acids, thus producing hydrogen peroxide that may contribute to the diverse toxic effects of this enzyme. This enzyme shows activity on L-Leu. This enzyme inhibits platelet aggregation in human platelet rich plasma induced by ADP (IC(50)=3.2 mg/mL), and shows antibacterial activities on both Gram-positive and Gram-negative bacteria (P.aeruginosa, V.cholerae, S.aureus, E.faecalis and E.coli). These two effects are due to hydrogen peroxide, since they are inhibited by catalase. It also induces edema in mouse paw pads but does not show hemolytic activity. This protein may also have activities in hemorrhage, and apoptosis. The chain is L-amino acid oxidase from Bothrops pictus (Desert lancehead).